The following is a 132-amino-acid chain: Interleukin-13 (132 aa).

An N-terminal signal peptide occupies residues 1-18 (MALLLTTVIALTCLGGFA). Residues Asn-38, Asn-49, Asn-57, and Asn-72 are each glycosylated (N-linked (GlcNAc...) asparagine). 2 disulfide bridges follow: Cys-48–Cys-76 and Cys-64–Cys-90.

It belongs to the IL-4/IL-13 family. In terms of assembly, interacts with IL13RA2.

The protein resides in the secreted. Its function is as follows. Cytokine that plays important roles in allergic inflammation and immune response to parasite infection. Synergizes with IL2 in regulating interferon-gamma synthesis. Stimulates B-cell proliferation, and activation of eosinophils, basophils, and mast cells. Plays an important role in controlling IL33 activity by modulating the production of transmembrane and soluble forms of interleukin-1 receptor-like 1/IL1RL1. Displays the capacity to antagonize Th1-driven proinflammatory immune response and downregulates synthesis of many proinflammatory cytokines including IL1, IL6, IL10, IL12 and TNF-alpha through a mechanism that partially involves suppression of NF-kappa-B. Also functions on nonhematopoietic cells, including endothelial cells where it induces vascular cell adhesion protein 1/VCAM1, which is important in the recruitment of eosinophils. Exerts its biological effects through its receptors which comprises the IL4R chain and the IL13RA1 chain, to activate JAK1 and TYK2, leading to the activation of STAT6. Aside from IL13RA1, another receptor IL13RA2 acts as a high affinity decoy for IL13 and mediates internalization and depletion of extracellular IL13. The polypeptide is Interleukin-13 (IL13) (Pan troglodytes (Chimpanzee)).